We begin with the raw amino-acid sequence, 316 residues long: Pseudouridine-5'-phosphate glycosidase (316 aa).

Glu-31 (proton donor) is an active-site residue. Lys-92 and Val-112 together coordinate substrate. Mn(2+) is bound at residue Asp-144. Residue 146–148 participates in substrate binding; sequence SAD. Catalysis depends on Lys-165, which acts as the Nucleophile.

This sequence belongs to the pseudouridine-5'-phosphate glycosidase family. Homotrimer. Requires Mn(2+) as cofactor.

The enzyme catalyses D-ribose 5-phosphate + uracil = psi-UMP + H2O. Functionally, catalyzes the reversible cleavage of pseudouridine 5'-phosphate (PsiMP) to ribose 5-phosphate and uracil. Functions biologically in the cleavage direction, as part of a pseudouridine degradation pathway. Part of an operon that could be involved in the biosynthesis of the blue pigment indigoidine, which is implicated in pathogenicity and protection from oxidative stress. The chain is Pseudouridine-5'-phosphate glycosidase from Dickeya dadantii (strain 3937) (Erwinia chrysanthemi (strain 3937)).